The sequence spans 315 residues: Putative heme-binding peroxidase (315 aa).

Residue H40 is the Proton acceptor of the active site. H169 lines the heme b pocket. W185 serves as the catalytic Tryptophan radical intermediate. Positions 267–286 (EEGKPLDKTAPPAGDETCPV) are disordered.

This sequence belongs to the peroxidase family. Cytochrome c peroxidase subfamily. The cofactor is heme b.

Destroys radicals which are normally produced within the cells and which are toxic to biological systems. The chain is Putative heme-binding peroxidase from Cryptococcus neoformans var. neoformans serotype D (strain B-3501A) (Filobasidiella neoformans).